The chain runs to 293 residues: ATP synthase gamma chain (293 aa).

It belongs to the ATPase gamma chain family. F-type ATPases have 2 components, CF(1) - the catalytic core - and CF(0) - the membrane proton channel. CF(1) has five subunits: alpha(3), beta(3), gamma(1), delta(1), epsilon(1). CF(0) has three main subunits: a, b and c.

Its subcellular location is the cell inner membrane. In terms of biological role, produces ATP from ADP in the presence of a proton gradient across the membrane. The gamma chain is believed to be important in regulating ATPase activity and the flow of protons through the CF(0) complex. In Nitrosospira multiformis (strain ATCC 25196 / NCIMB 11849 / C 71), this protein is ATP synthase gamma chain.